The following is a 128-amino-acid chain: uncharacterized protein (128 aa).

This is an uncharacterized protein from Gallus gallus (Chicken).